A 78-amino-acid chain; its full sequence is Translation initiation factor IF-1 (78 aa).

Residues 2-78 (SKNNLNETES…TRARITYRFK (77 aa)) enclose the S1-like domain.

The protein belongs to the IF-1 family. In terms of assembly, component of the 30S ribosomal translation pre-initiation complex which assembles on the 30S ribosome in the order IF-2 and IF-3, IF-1 and N-formylmethionyl-tRNA(fMet); mRNA recruitment can occur at any time during PIC assembly.

Its subcellular location is the cytoplasm. Functionally, one of the essential components for the initiation of protein synthesis. Stabilizes the binding of IF-2 and IF-3 on the 30S subunit to which N-formylmethionyl-tRNA(fMet) subsequently binds. Helps modulate mRNA selection, yielding the 30S pre-initiation complex (PIC). Upon addition of the 50S ribosomal subunit IF-1, IF-2 and IF-3 are released leaving the mature 70S translation initiation complex. In Onion yellows phytoplasma (strain OY-M), this protein is Translation initiation factor IF-1.